The chain runs to 638 residues: 1-deoxy-D-xylulose-5-phosphate synthase (638 aa).

Residues His-77 and 118–120 (AHA) contribute to the thiamine diphosphate site. Asp-149 contributes to the Mg(2+) binding site. Thiamine diphosphate is bound by residues 150–151 (GS), Asn-178, Tyr-287, and Glu-369. Asn-178 contacts Mg(2+).

This sequence belongs to the transketolase family. DXPS subfamily. In terms of assembly, homodimer. Requires Mg(2+) as cofactor. Thiamine diphosphate serves as cofactor.

The catalysed reaction is D-glyceraldehyde 3-phosphate + pyruvate + H(+) = 1-deoxy-D-xylulose 5-phosphate + CO2. It participates in metabolic intermediate biosynthesis; 1-deoxy-D-xylulose 5-phosphate biosynthesis; 1-deoxy-D-xylulose 5-phosphate from D-glyceraldehyde 3-phosphate and pyruvate: step 1/1. Functionally, catalyzes the acyloin condensation reaction between C atoms 2 and 3 of pyruvate and glyceraldehyde 3-phosphate to yield 1-deoxy-D-xylulose-5-phosphate (DXP). This is 1-deoxy-D-xylulose-5-phosphate synthase from Phenylobacterium zucineum (strain HLK1).